An 83-amino-acid polypeptide reads, in one-letter code: Exodeoxyribonuclease 7 small subunit (83 aa).

This sequence belongs to the XseB family. As to quaternary structure, heterooligomer composed of large and small subunits.

It localises to the cytoplasm. It catalyses the reaction Exonucleolytic cleavage in either 5'- to 3'- or 3'- to 5'-direction to yield nucleoside 5'-phosphates.. Functionally, bidirectionally degrades single-stranded DNA into large acid-insoluble oligonucleotides, which are then degraded further into small acid-soluble oligonucleotides. This Mesorhizobium japonicum (strain LMG 29417 / CECT 9101 / MAFF 303099) (Mesorhizobium loti (strain MAFF 303099)) protein is Exodeoxyribonuclease 7 small subunit.